Here is a 282-residue protein sequence, read N- to C-terminus: MAASTMSVCSSACSDSWQVDACPESCCEPHCCALSCCAPAPCLTLVCTPVSRVSSPCCQAACEPSPCQSGCTSSCTPSCCQQSSCQPACCTSSPCQQACCVPVCCKPVCCLPTCSKDSSSCCQQSSCQPTCCASSSSQQSCCVPVCCKPVCYVPTCSEDSSSCCQQSSCHPACCTSSPCQQACCVPVRCKPVCCKPICCVPVCSGASTSCCQQSSCQPACCTTSCCRPSSSVSLLCRPVCRPACCMPVSSCCAPASSCQASCCRPASCVSLLCRPACSRPAC.

Repeat copies occupy residues 26–30 (CCEPH), 31–35 (CCALS), 36–40 (CCAPA), 57–61 (CCQAA), 79–83 (CCQQS), 89–93 (CCTSS), 99–103 (CCVPV), 104–108 (CCKPV), 109–113 (CCLPT), 121–125 (CCQQS), 131–135 (CCASS), 141–145 (CCVPV), 146–150 (CCKPV), 163–167 (CCQQS), 173–177 (CCTSS), 183–187 (CCVPV), 193–197 (CCKPI), 198–202 (CCVPV), 210–214 (CCQQS), 220–224 (CCTTS), 225–229 (CCRPS), 244–248 (CCMPV), 251–255 (CCAPA), and 262–266 (CCRPA). The interval 26–266 (CCEPHCCALS…SCQASCCRPA (241 aa)) is 24 X 5 AA repeats of C-C-X(3).

Belongs to the KRTAP type 10 family. As to quaternary structure, interacts with hair keratins. As to expression, restricted to a narrow region of the hair fiber cuticle, lying approximately 20 cell layers above the apex of the dermal papilla of the hair root; not detected in any other tissues.

Functionally, in the hair cortex, hair keratin intermediate filaments are embedded in an interfilamentous matrix, consisting of hair keratin-associated proteins (KRTAP), which are essential for the formation of a rigid and resistant hair shaft through their extensive disulfide bond cross-linking with abundant cysteine residues of hair keratins. The matrix proteins include the high-sulfur and high-glycine-tyrosine keratins. This Homo sapiens (Human) protein is Keratin-associated protein 10-1 (KRTAP10-1).